A 271-amino-acid polypeptide reads, in one-letter code: Putative pyruvate, phosphate dikinase regulatory protein (271 aa).

ADP is bound at residue 150 to 157; that stretch reads GVSRTSKT.

The protein belongs to the pyruvate, phosphate/water dikinase regulatory protein family. PDRP subfamily.

The enzyme catalyses N(tele)-phospho-L-histidyl/L-threonyl-[pyruvate, phosphate dikinase] + ADP = N(tele)-phospho-L-histidyl/O-phospho-L-threonyl-[pyruvate, phosphate dikinase] + AMP + H(+). It catalyses the reaction N(tele)-phospho-L-histidyl/O-phospho-L-threonyl-[pyruvate, phosphate dikinase] + phosphate + H(+) = N(tele)-phospho-L-histidyl/L-threonyl-[pyruvate, phosphate dikinase] + diphosphate. Its function is as follows. Bifunctional serine/threonine kinase and phosphorylase involved in the regulation of the pyruvate, phosphate dikinase (PPDK) by catalyzing its phosphorylation/dephosphorylation. The protein is Putative pyruvate, phosphate dikinase regulatory protein of Oceanobacillus iheyensis (strain DSM 14371 / CIP 107618 / JCM 11309 / KCTC 3954 / HTE831).